The primary structure comprises 513 residues: ATP synthase subunit alpha (513 aa).

Residue 169 to 176 (GDRQVGKT) participates in ATP binding.

The protein belongs to the ATPase alpha/beta chains family. As to quaternary structure, F-type ATPases have 2 components, CF(1) - the catalytic core - and CF(0) - the membrane proton channel. CF(1) has five subunits: alpha(3), beta(3), gamma(1), delta(1), epsilon(1). CF(0) has three main subunits: a(1), b(2) and c(9-12). The alpha and beta chains form an alternating ring which encloses part of the gamma chain. CF(1) is attached to CF(0) by a central stalk formed by the gamma and epsilon chains, while a peripheral stalk is formed by the delta and b chains.

The protein localises to the cell inner membrane. The enzyme catalyses ATP + H2O + 4 H(+)(in) = ADP + phosphate + 5 H(+)(out). Functionally, produces ATP from ADP in the presence of a proton gradient across the membrane. The alpha chain is a regulatory subunit. The protein is ATP synthase subunit alpha of Aeromonas hydrophila subsp. hydrophila (strain ATCC 7966 / DSM 30187 / BCRC 13018 / CCUG 14551 / JCM 1027 / KCTC 2358 / NCIMB 9240 / NCTC 8049).